The following is a 251-amino-acid chain: Geranylgeranylglyceryl phosphate synthase (251 aa).

2 residues coordinate Mg(2+): D25 and S54. Sn-glycerol 1-phosphate contacts are provided by residues 173–179, 204–205, and 226–227; these read YLEAGSG, GG, and GT.

The protein belongs to the GGGP/HepGP synthase family. Group II subfamily. Requires Mg(2+) as cofactor.

It localises to the cytoplasm. The enzyme catalyses sn-glycerol 1-phosphate + (2E,6E,10E)-geranylgeranyl diphosphate = sn-3-O-(geranylgeranyl)glycerol 1-phosphate + diphosphate. Its pathway is membrane lipid metabolism; glycerophospholipid metabolism. Its function is as follows. Prenyltransferase that catalyzes the transfer of the geranylgeranyl moiety of geranylgeranyl diphosphate (GGPP) to the C3 hydroxyl of sn-glycerol-1-phosphate (G1P). This reaction is the first ether-bond-formation step in the biosynthesis of archaeal membrane lipids. The sequence is that of Geranylgeranylglyceryl phosphate synthase from Pyrococcus furiosus (strain ATCC 43587 / DSM 3638 / JCM 8422 / Vc1).